The following is a 373-amino-acid chain: Deoxyguanosinetriphosphate triphosphohydrolase-like protein 1 (373 aa).

The segment at 21–43 (RSSEARRAVPEAPSETRTAYQKD) is disordered. Residues 76-198 (RLTHTLEVQQ…VDAADALAYT (123 aa)) enclose the HD domain.

This sequence belongs to the dGTPase family. Type 2 subfamily.

The polypeptide is Deoxyguanosinetriphosphate triphosphohydrolase-like protein 1 (Deinococcus radiodurans (strain ATCC 13939 / DSM 20539 / JCM 16871 / CCUG 27074 / LMG 4051 / NBRC 15346 / NCIMB 9279 / VKM B-1422 / R1)).